A 153-amino-acid chain; its full sequence is UPF0179 protein AF_2154 (153 aa).

The protein belongs to the UPF0179 family.

This Archaeoglobus fulgidus (strain ATCC 49558 / DSM 4304 / JCM 9628 / NBRC 100126 / VC-16) protein is UPF0179 protein AF_2154.